The sequence spans 468 residues: Argininosuccinate lyase (468 aa).

Belongs to the lyase 1 family. Argininosuccinate lyase subfamily.

It localises to the cytoplasm. The enzyme catalyses 2-(N(omega)-L-arginino)succinate = fumarate + L-arginine. The protein operates within amino-acid biosynthesis; L-arginine biosynthesis; L-arginine from L-ornithine and carbamoyl phosphate: step 3/3. This is Argininosuccinate lyase from Methanothermobacter thermautotrophicus (strain ATCC 29096 / DSM 1053 / JCM 10044 / NBRC 100330 / Delta H) (Methanobacterium thermoautotrophicum).